Here is a 345-residue protein sequence, read N- to C-terminus: Phosphoribosylformylglycinamidine cyclo-ligase (345 aa).

The protein belongs to the AIR synthase family.

Its subcellular location is the cytoplasm. It carries out the reaction 2-formamido-N(1)-(5-O-phospho-beta-D-ribosyl)acetamidine + ATP = 5-amino-1-(5-phospho-beta-D-ribosyl)imidazole + ADP + phosphate + H(+). It participates in purine metabolism; IMP biosynthesis via de novo pathway; 5-amino-1-(5-phospho-D-ribosyl)imidazole from N(2)-formyl-N(1)-(5-phospho-D-ribosyl)glycinamide: step 2/2. This is Phosphoribosylformylglycinamidine cyclo-ligase from Actinobacillus pleuropneumoniae serotype 5b (strain L20).